A 354-amino-acid polypeptide reads, in one-letter code: UDP-N-acetylglucosamine--N-acetylmuramyl-(pentapeptide) pyrophosphoryl-undecaprenol N-acetylglucosamine transferase (354 aa).

UDP-N-acetyl-alpha-D-glucosamine contacts are provided by residues threonine 11–glycine 13, arginine 164, serine 194, and glutamine 289.

The protein belongs to the glycosyltransferase 28 family. MurG subfamily.

Its subcellular location is the cell membrane. The enzyme catalyses di-trans,octa-cis-undecaprenyl diphospho-N-acetyl-alpha-D-muramoyl-L-alanyl-D-glutamyl-meso-2,6-diaminopimeloyl-D-alanyl-D-alanine + UDP-N-acetyl-alpha-D-glucosamine = di-trans,octa-cis-undecaprenyl diphospho-[N-acetyl-alpha-D-glucosaminyl-(1-&gt;4)]-N-acetyl-alpha-D-muramoyl-L-alanyl-D-glutamyl-meso-2,6-diaminopimeloyl-D-alanyl-D-alanine + UDP + H(+). The protein operates within cell wall biogenesis; peptidoglycan biosynthesis. Functionally, cell wall formation. Catalyzes the transfer of a GlcNAc subunit on undecaprenyl-pyrophosphoryl-MurNAc-pentapeptide (lipid intermediate I) to form undecaprenyl-pyrophosphoryl-MurNAc-(pentapeptide)GlcNAc (lipid intermediate II). The chain is UDP-N-acetylglucosamine--N-acetylmuramyl-(pentapeptide) pyrophosphoryl-undecaprenol N-acetylglucosamine transferase from Clostridium botulinum (strain Kyoto / Type A2).